Reading from the N-terminus, the 150-residue chain is Cytochrome c oxidase subunit 5A, mitochondrial (150 aa).

Residues 1–41 (MLGAALRRCAVAATTRAGPRGLLHSARTPGPAAAIQSVRCY) constitute a mitochondrion transit peptide. Residues 2-17 (LGAALRRCAVAATTRA) carry the SIFI-degron motif. Residues lysine 87 and lysine 113 each carry the N6-acetyllysine modification. The residue at position 141 (threonine 141) is a Phosphothreonine.

The protein belongs to the cytochrome c oxidase subunit 5A family. Component of the cytochrome c oxidase (complex IV, CIV), a multisubunit enzyme composed of 14 subunits. The complex is composed of a catalytic core of 3 subunits MT-CO1, MT-CO2 and MT-CO3, encoded in the mitochondrial DNA, and 11 supernumerary subunits COX4I, COX5A, COX5B, COX6A, COX6B, COX6C, COX7A, COX7B, COX7C, COX8 and NDUFA4, which are encoded in the nuclear genome. The complex exists as a monomer or a dimer and forms supercomplexes (SCs) in the inner mitochondrial membrane with NADH-ubiquinone oxidoreductase (complex I, CI) and ubiquinol-cytochrome c oxidoreductase (cytochrome b-c1 complex, complex III, CIII), resulting in different assemblies (supercomplex SCI(1)III(2)IV(1) and megacomplex MCI(2)III(2)IV(2)). Interacts with AFG1L. Interacts with RAB5IF. In response to mitochondrial stress, the precursor protein is ubiquitinated by the SIFI complex in the cytoplasm before mitochondrial import, leading to its degradation. Within the SIFI complex, UBR4 initiates ubiquitin chain that are further elongated or branched by KCMF1.

The protein resides in the mitochondrion inner membrane. Its pathway is energy metabolism; oxidative phosphorylation. Its function is as follows. Component of the cytochrome c oxidase, the last enzyme in the mitochondrial electron transport chain which drives oxidative phosphorylation. The respiratory chain contains 3 multisubunit complexes succinate dehydrogenase (complex II, CII), ubiquinol-cytochrome c oxidoreductase (cytochrome b-c1 complex, complex III, CIII) and cytochrome c oxidase (complex IV, CIV), that cooperate to transfer electrons derived from NADH and succinate to molecular oxygen, creating an electrochemical gradient over the inner membrane that drives transmembrane transport and the ATP synthase. Cytochrome c oxidase is the component of the respiratory chain that catalyzes the reduction of oxygen to water. Electrons originating from reduced cytochrome c in the intermembrane space (IMS) are transferred via the dinuclear copper A center (CU(A)) of subunit 2 and heme A of subunit 1 to the active site in subunit 1, a binuclear center (BNC) formed by heme A3 and copper B (CU(B)). The BNC reduces molecular oxygen to 2 water molecules using 4 electrons from cytochrome c in the IMS and 4 protons from the mitochondrial matrix. The protein is Cytochrome c oxidase subunit 5A, mitochondrial (COX5A) of Pan troglodytes (Chimpanzee).